Consider the following 222-residue polypeptide: MSSSDSIRMVLIGPPGAGKGTQAPNLVERFHAAHLATGDMLRSQISKGTELGLQAKKIMDQGGLVSDDIMVNMIKDELTNNPACKNGFILDGFPRTIPQAEKLDNMLKERGTPLEKAVELKIDDELLVARITGRLIHPASGRSYHKLFNPPKEDMKDDVTGEPLVQRSDDNEDALKKRLGAYHDQTEPIVDFYKKTGIWADVDASQPPETVWSAILKALGKN.

Residue 16 to 21 participates in ATP binding; it reads GAGKGT. The tract at residues 36 to 65 is NMP; it reads ATGDMLRSQISKGTELGLQAKKIMDQGGLV. Residues Thr-37, Arg-42, 63-65, 92-95, and Gln-99 each bind AMP; these read GLV and GFPR. The segment at 133-170 is LID; that stretch reads GRLIHPASGRSYHKLFNPPKEDMKDDVTGEPLVQRSDD. Residues Arg-134 and 143–144 contribute to the ATP site; that span reads SY. Positions 167 and 178 each coordinate AMP. Gln-206 serves as a coordination point for ATP.

Belongs to the adenylate kinase family. AK2 subfamily. Monomer.

Its subcellular location is the cytoplasm. It is found in the cytosol. The protein localises to the mitochondrion intermembrane space. The enzyme catalyses AMP + ATP = 2 ADP. Its function is as follows. Catalyzes the reversible transfer of the terminal phosphate group between ATP and AMP. Plays an important role in cellular energy homeostasis and in adenine nucleotide metabolism. Adenylate kinase activity is critical for regulation of the phosphate utilization and the AMP de novo biosynthesis pathways. This chain is Adenylate kinase, found in Candida glabrata (strain ATCC 2001 / BCRC 20586 / JCM 3761 / NBRC 0622 / NRRL Y-65 / CBS 138) (Yeast).